The following is a 362-amino-acid chain: Methylthioribose-1-phosphate isomerase (362 aa).

Residues 53 to 55 (RGA), Arg-90, and Gln-201 contribute to the substrate site. The active-site Proton donor is the Asp-242. 252–253 (NK) lines the substrate pocket.

It belongs to the eIF-2B alpha/beta/delta subunits family. MtnA subfamily.

The enzyme catalyses 5-(methylsulfanyl)-alpha-D-ribose 1-phosphate = 5-(methylsulfanyl)-D-ribulose 1-phosphate. Its pathway is amino-acid biosynthesis; L-methionine biosynthesis via salvage pathway; L-methionine from S-methyl-5-thio-alpha-D-ribose 1-phosphate: step 1/6. Catalyzes the interconversion of methylthioribose-1-phosphate (MTR-1-P) into methylthioribulose-1-phosphate (MTRu-1-P). This chain is Methylthioribose-1-phosphate isomerase, found in Paramagnetospirillum magneticum (strain ATCC 700264 / AMB-1) (Magnetospirillum magneticum).